Reading from the N-terminus, the 86-residue chain is U-actitoxin-Avd10a (86 aa).

A signal peptide spans 1-20 (MSRIAILLFVAFLLVAGISA). Positions 21–42 (KSTAHFKKNVLADLFKERRFNA) are excised as a propeptide. The ShKT domain occupies 51 to 86 (CVNIDVDSFCDGMAERGACNIIPQMATNCAKACNSC). 3 cysteine pairs are disulfide-bonded: Cys-51/Cys-86, Cys-60/Cys-79, and Cys-69/Cys-83.

Belongs to the sea anemone type 1 potassium channel toxin family. Type 1b subfamily.

The protein localises to the secreted. The protein resides in the nematocyst. In terms of biological role, inhibits voltage-gated potassium channels (Kv1/KCNA). This chain is U-actitoxin-Avd10a, found in Anemonia viridis (Snakelocks anemone).